Here is a 671-residue protein sequence, read N- to C-terminus: Carbohydrate acetyl esterase/feruloyl esterase (671 aa).

Positions 1–24 (MYQSTLKTILLASALLILPASMSA) are cleaved as a signal peptide. The segment at 1–296 (MYQSTLKTIL…YGEAVARHLG (296 aa)) is carbohydrate acetyl esterase. Residues S55, D271, and H274 each act as for acetyl esterase activity in the active site. The segment at 297–671 (YEPKRPYIEM…NEFIPHLFKK (375 aa)) is feruloyl esterase.

It in the N-terminal section; belongs to the carbohydrate esterase 6 family.

The catalysed reaction is feruloyl-polysaccharide + H2O = ferulate + polysaccharide.. It participates in glycan degradation; xylan degradation. Functionally, involved in degradation of plant cell wall polysaccharides. Bifunctional esterase that possesses both acetyl esterase and ferulic acid esterase activities. Has deacetylase activity towards acetylated xylo-oligosaccharides smaller than xylo-heptaose, as well as from glucose-pentaacetate. Is also able to release ferulic acid from methylferulate, and from the more natural substrates wheat bran, corn fiber, and XOS(FA,Ac), a corn fiber-derived substrate enriched in O-acetyl and ferulic acid esters. This chain is Carbohydrate acetyl esterase/feruloyl esterase, found in Xylanibacter ruminicola (strain ATCC 19189 / DSM 19721 / CIP 105475 / JCM 8958 / 23) (Prevotella ruminicola).